Reading from the N-terminus, the 94-residue chain is Cell division protein FtsB (94 aa).

Over 1–8 the chain is Cytoplasmic; it reads MRLRSPYW. The chain crosses the membrane as a helical span at residues 9-26; the sequence is LFVVLILALAGLQYRLWV. Residues 27 to 94 are Periplasmic-facing; it reads GDGSLAQVRD…DGETLYQLAK (68 aa). A coiled-coil region spans residues 31 to 78; sequence LAQVRDLQKQIADQHGENERLLERNRILEAEVAELKKGTETVEERARH.

This sequence belongs to the FtsB family. Part of a complex composed of FtsB, FtsL and FtsQ.

It localises to the cell inner membrane. In terms of biological role, essential cell division protein. May link together the upstream cell division proteins, which are predominantly cytoplasmic, with the downstream cell division proteins, which are predominantly periplasmic. The polypeptide is Cell division protein FtsB (Pseudomonas aeruginosa (strain ATCC 15692 / DSM 22644 / CIP 104116 / JCM 14847 / LMG 12228 / 1C / PRS 101 / PAO1)).